The chain runs to 116 residues: SPbeta prophage-derived uncharacterized protein YomQ (116 aa).

In Bacillus subtilis (strain 168), this protein is SPbeta prophage-derived uncharacterized protein YomQ (yomQ).